The sequence spans 151 residues: MKAICIISGDVHGKIYFQQESANQPLKISGYLLNLPRGLHGFHVHEYGDTSNGCTSAGEHFNPTNEDHGAPDAEIRHVGDLGNIKSAGYNSLTEVNMMDNVMSLYGPHNIIGRSLVVHTDKDDLGLTDHPLSKTTGNSGGRLGCGIIAICK.

The Cu cation site is built by histidine 43, histidine 45, and histidine 60. The cysteines at positions 54 and 144 are disulfide-linked. Zn(2+)-binding residues include histidine 60, histidine 68, histidine 77, and aspartate 80. Histidine 118 provides a ligand contact to Cu cation.

This sequence belongs to the Cu-Zn superoxide dismutase family. Cu cation is required as a cofactor. Requires Zn(2+) as cofactor.

It catalyses the reaction 2 superoxide + 2 H(+) = H2O2 + O2. Its function is as follows. Nonessential for normal virus replication. Could be either non-functional or with a low activity. This chain is Putative superoxide dismutase [Cu-Zn] (SOD), found in Lepidoptera (butterflies and moths).